The primary structure comprises 511 residues: Vesicular acetylcholine transporter (511 aa).

Over 1–36 (MVVGQAKAAMGKISSAIGERSKRISGAMNEPLRKRK) the chain is Cytoplasmic. Residues 37–57 (ILLVIVCIAMLLDNMLYMVIV) traverse the membrane as a helical segment. At 58 to 108 (PIVPNYLETIRTYKLVYITIPSNGTNGSLLNSTQRAVLERNPNANEDIQIG) the chain is on the lumenal, vesicle side. 3 N-linked (GlcNAc...) asparagine glycosylation sites follow: asparagine 80, asparagine 83, and asparagine 88. Residues 109-129 (VLFASKAILQLLSNPFTGTFI) form a helical membrane-spanning segment. Residues 130–135 (DRVGYD) are Cytoplasmic-facing. The helical transmembrane segment at 136 to 156 (IPLLIGLTIMFFSTITFAFGE) threads the bilayer. Residues 157–165 (SYAILFAAR) lie on the Lumenal, vesicle side of the membrane. Residues 166–186 (SLQGLGSAFADTSGIAMIADK) traverse the membrane as a helical segment. Over 187–197 (YTEESERTQAL) the chain is Cytoplasmic. Residues 198–218 (GIALAFISFGSLVAPPFGGVL) form a helical membrane-spanning segment. At 219–225 (YQFAGKW) the chain is on the lumenal, vesicle side. A helical transmembrane segment spans residues 226 to 246 (VPFLVLSFVCLLDGILLLMVV). Residues 247 to 267 (TPFASRTRGNTLQGTPIHKLM) lie on the Cytoplasmic side of the membrane. The helical transmembrane segment at 268 to 288 (IDPYIAVVAGALTTCNIPLAF) threads the bilayer. Residues 289–306 (LEPTISNWMKKTMNASEW) lie on the Lumenal, vesicle side of the membrane. Residue asparagine 302 is glycosylated (N-linked (GlcNAc...) asparagine). A helical membrane pass occupies residues 307-327 (QMGITWLPAFFPHILGVYITV). At 328–337 (KLAAKYPNYQ) the chain is on the cytoplasmic side. The helical transmembrane segment at 338–358 (WLYGAFGLVIIGVSSCTIPAC) threads the bilayer. Topologically, residues 359 to 363 (RNFEE) are lumenal, vesicle. A helical membrane pass occupies residues 364 to 384 (LIIPLCALCFGIALVDTALLP). Over 385–400 (TLAFLVDIRYVSVYGS) the chain is Cytoplasmic. The chain crosses the membrane as a helical span at residues 401–421 (VYAIADISYSVAYALGPIMAG). Topologically, residues 422-428 (QIVHDLG) are lumenal, vesicle. A helical transmembrane segment spans residues 429-449 (FVQLNLGMGLVNILYAPALLF). Residues 450–511 (LRNVCQMKPS…VLSDQEGYSE (62 aa)) are Cytoplasmic-facing. Residues 486 to 511 (AKEPHGTSSGNHSVHAVLSDQEGYSE) form a disordered region.

This sequence belongs to the major facilitator superfamily. Vesicular transporter family. As to expression, high expression in the electric lobe of the brain.

The protein resides in the membrane. Its function is as follows. Involved in acetylcholine transport into synaptic vesicles. The polypeptide is Vesicular acetylcholine transporter (Torpedo torpedo (Common torpedo)).